Reading from the N-terminus, the 590-residue chain is G protein-coupled receptor kinase 5 (590 aa).

The N-terminal stretch occupies residues 1–185 (MELENIVANT…LERQPVTKNT (185 aa)). Residues 20 to 39 (GGKRKGKSKKWKEILKFPHI) form an interaction with calmodulin region. One can recognise an RGS domain in the interval 53-171 (YYSLCDKQPI…LDSMYFDRFL (119 aa)). Serine 136 is modified (phosphoserine). Residues 186–448 (FRQYRVLGKG…AAEVKRHPFF (263 aa)) form the Protein kinase domain. ATP contacts are provided by residues 192-200 (LGKGGFGEV) and lysine 215. Aspartate 311 functions as the Proton acceptor in the catalytic mechanism. Positions 388 to 395 (RKEKVKRE) match the Nuclear localization signal motif. The region spanning 449 to 514 (RNMNFKRLEA…GSVPIPWQNE (66 aa)) is the AGC-kinase C-terminal domain. Serine 484 carries the post-translational modification Phosphoserine; by autocatalysis. Phosphothreonine; by autocatalysis is present on threonine 485. The segment at 546–565 (PKKGLFHRLFRRQHQSNSKS) is sufficient for membrane localization. The disordered stretch occupies residues 557–590 (RQHQSNSKSSPTPKTSCNHRINSNHINSNSTGSS). A compositionally biased stretch (low complexity) spans 561–590 (SNSKSSPTPKTSCNHRINSNHINSNSTGSS). Serine 579 is modified (phosphoserine).

It belongs to the protein kinase superfamily. AGC Ser/Thr protein kinase family. GPRK subfamily. In terms of assembly, interacts with ST13 (via the C-terminus 303-319 AA). Interacts with TP53/p53. Interacts with HTR4 (via C-terminus 330-346 AA); this interaction is promoted by 5-HT (serotonin). Interacts with HDAC5. Interacts with GIT1. Post-translationally, autophosphorylated. Autophosphorylation may play a critical role in the regulation of GRK5 kinase activity.

The protein resides in the cytoplasm. It is found in the nucleus. It localises to the cell membrane. It carries out the reaction [G-protein-coupled receptor] + ATP = [G-protein-coupled receptor]-phosphate + ADP + H(+). With respect to regulation, inhibited by calmodulin with an IC(50) of 50 nM. Calmodulin inhibits GRK5 association with receptor and phospholipid. Functionally, serine/threonine kinase that phosphorylates preferentially the activated forms of a variety of G-protein-coupled receptors (GPCRs). Such receptor phosphorylation initiates beta-arrestin-mediated receptor desensitization, internalization, and signaling events leading to their down-regulation. Phosphorylates a variety of GPCRs, including adrenergic receptors, muscarinic acetylcholine receptors (more specifically Gi-coupled M2/M4 subtypes), dopamine receptors and opioid receptors. In addition to GPCRs, also phosphorylates various substrates: Hsc70-interacting protein/ST13, TP53/p53, HDAC5, and arrestin-1/ARRB1. Phosphorylation of ARRB1 by GRK5 inhibits G-protein independent MAPK1/MAPK3 signaling downstream of 5HT4-receptors. Phosphorylation of HDAC5, a repressor of myocyte enhancer factor 2 (MEF2) leading to nuclear export of HDAC5 and allowing MEF2-mediated transcription. Phosphorylation of TP53/p53, a crucial tumor suppressor, inhibits TP53/p53-mediated apoptosis. Phosphorylation of ST13 regulates internalization of the chemokine receptor. Phosphorylates rhodopsin (RHO) (in vitro) and a non G-protein-coupled receptor, LRP6 during Wnt signaling (in vitro). In Mus musculus (Mouse), this protein is G protein-coupled receptor kinase 5 (Grk5).